An 860-amino-acid chain; its full sequence is GAS2-like protein 2 (860 aa).

The segment covering 1-12 (MSQHVGHGRRPR) has biased composition (basic residues). A disordered region spans residues 1 to 22 (MSQHVGHGRRPRTPGPPVRSIR). A Calponin-homology (CH) domain is found at 32 to 159 (EAMKEDLAEW…CLLELGRRAW (128 aa)). Positions 201–273 (CHFHNLDQMV…HYLDKHDPCR (73 aa)) constitute a GAR domain. 5 disordered regions span residues 281 to 459 (PGSF…SLAS), 473 to 574 (QLSE…RHTS), 697 to 743 (TTVR…KGKR), 758 to 781 (KLRP…IPKP), and 801 to 860 (ATLG…ESWV). Polar residues predominate over residues 301-316 (GPSQPQPTMTISRSQS). Residues 347-364 (PPVRARTLREDPLPRSQE) show a composition bias toward basic and acidic residues. 2 stretches are compositionally biased toward polar residues: residues 365-393 (KPTP…STLS) and 473-485 (QLSE…SSSP). The tract at residues 431 to 860 (QRLQIPEATS…PLSPEEESWV (430 aa)) is interaction with ADORA2A and GNAS. The span at 530-549 (NLDRSTHGHHSVEASGDHQT) shows a compositional bias: basic and acidic residues. The span at 724-733 (RSCSDPSSDK) shows a compositional bias: polar residues. The span at 758-768 (KLRPRIRPRRD) shows a compositional bias: basic residues. Positions 828-840 (SNISLESSIQPAE) are enriched in polar residues.

This sequence belongs to the GAS2 family. In terms of assembly, interacts with ADORA2A (via its cytoplasmic C-terminal domain). Interacts with GNAS, GNAL, GNAQ, and GNA13. Interacts with MAPRE1. In terms of tissue distribution, expressed in tracheal epithelial cells (at protein level).

The protein localises to the cytoplasm. The protein resides in the cytoskeleton. Its subcellular location is the cell membrane. It localises to the stress fiber. It is found in the cilium basal body. Involved in the cross-linking of microtubules and microfilaments. Regulates microtubule dynamics and stability by interacting with microtubule plus-end tracking proteins, such as MAPRE1, to regulate microtubule growth along actin stress fibers. Enhances ADORA2-mediated adenylyl cyclase activation by acting as a scaffold to recruit trimeric G-protein complexes to ADORA2A. Regulates ciliary orientation and performance in cells located in the airway. The chain is GAS2-like protein 2 (Gas2l2) from Mus musculus (Mouse).